Reading from the N-terminus, the 205-residue chain is Anaerobic dimethyl sulfoxide reductase chain B (205 aa).

3 consecutive 4Fe-4S ferredoxin-type domains span residues 4 to 32, 57 to 89, and 90 to 119; these read YGFY…LGTE, NIFA…KNAD, and GFVI…YDAQ. Residues Cys13, Cys16, Cys19, Cys23, Cys67, Cys70, Cys75, Cys79, Cys99, Cys102, Cys105, Cys109, Cys126, Cys129, Cys141, and Cys145 each coordinate [4Fe-4S] cluster.

As to quaternary structure, heterotrimeric enzyme composed of a catalytic heterodimer (DmsAB) and a membrane anchor protein (DmsC). It depends on [4Fe-4S] cluster as a cofactor.

In terms of biological role, electron transfer subunit of the terminal reductase during anaerobic growth on various sulfoxide and N-oxide compounds. This is Anaerobic dimethyl sulfoxide reductase chain B (dmsB) from Haemophilus influenzae (strain ATCC 51907 / DSM 11121 / KW20 / Rd).